The chain runs to 353 residues: UPF0283 membrane protein Spro_2618 (353 aa).

Helical transmembrane passes span 71-91, 101-121, and 214-234; these read MVTAGLTLFGVSVVAQGVQWV, IAMGGGVAGGLIVFAGVGSVV, and ESTLMIAVSPLAVVDMAFIAW.

The protein belongs to the UPF0283 family.

It localises to the cell inner membrane. The protein is UPF0283 membrane protein Spro_2618 of Serratia proteamaculans (strain 568).